The following is a 358-amino-acid chain: DNA polymerase IV (358 aa).

The 182-residue stretch at 4 to 185 folds into the UmuC domain; the sequence is IIHVDMDCFY…LPLIKIPGVG (182 aa). Mg(2+)-binding residues include aspartate 8 and aspartate 103. Glutamate 104 is a catalytic residue.

It belongs to the DNA polymerase type-Y family. Monomer. Mg(2+) is required as a cofactor.

It is found in the cytoplasm. It carries out the reaction DNA(n) + a 2'-deoxyribonucleoside 5'-triphosphate = DNA(n+1) + diphosphate. Functionally, poorly processive, error-prone DNA polymerase involved in untargeted mutagenesis. Copies undamaged DNA at stalled replication forks, which arise in vivo from mismatched or misaligned primer ends. These misaligned primers can be extended by PolIV. Exhibits no 3'-5' exonuclease (proofreading) activity. May be involved in translesional synthesis, in conjunction with the beta clamp from PolIII. This is DNA polymerase IV from Shewanella halifaxensis (strain HAW-EB4).